The sequence spans 247 residues: NH(3)-dependent NAD(+) synthetase (247 aa).

Gly-29–Ser-36 serves as a coordination point for ATP. Mg(2+) is bound at residue Asp-35. Deamido-NAD(+) is bound at residue Arg-120. Thr-140 provides a ligand contact to ATP. Glu-145 provides a ligand contact to Mg(2+). 2 residues coordinate deamido-NAD(+): Lys-153 and Asp-160. ATP-binding residues include Lys-169 and Ser-191. Residue His-237 to Lys-238 participates in deamido-NAD(+) binding.

It belongs to the NAD synthetase family. Homodimer.

The catalysed reaction is deamido-NAD(+) + NH4(+) + ATP = AMP + diphosphate + NAD(+) + H(+). It functions in the pathway cofactor biosynthesis; NAD(+) biosynthesis; NAD(+) from deamido-NAD(+) (ammonia route): step 1/1. Its function is as follows. Catalyzes the ATP-dependent amidation of deamido-NAD to form NAD. Uses ammonia as a nitrogen source. The protein is NH(3)-dependent NAD(+) synthetase of Alkaliphilus metalliredigens (strain QYMF).